Consider the following 123-residue polypeptide: Putative oocyte-secreted protein 1 homolog (123 aa).

The first 26 residues, 1–26 (MKTILGFKGLFYLHSLIWTCAGDWSA), serve as a signal peptide directing secretion.

The protein belongs to the PLAC1 family.

Its subcellular location is the secreted. Its function is as follows. May be involved in cell differentiation. The protein is Putative oocyte-secreted protein 1 homolog (OOSP1) of Homo sapiens (Human).